The primary structure comprises 328 residues: MSGHHEAKPYQPRRGPAPADEEAAPAAAADEAEAEAEVEAMERYEQEQEYEEGEEGEEEEYEGGEGVPMDADASAAAVAGMDPHGEMVPVAGGEAGGGYPHVASNTLTLSFQGEVYVFESVSAERVQAVLLLLGGRELAPGSGSVPSSSAAYSKKMNFPHRMASLMRFREKRKERNFDKKIRYTVRKEVALRMQRNRGQFTSSKSKAEEATSVITSSEGSPNWGAVEGRPPSAAECHHCGISAASTPMMRRGPDGPRTLCNACGLMWANKGTMREVTKGPPVPLQIVPAATNDVQNGIVEATGVEQHNSAVEEAVSAANGHESQSGVA.

The disordered stretch occupies residues 1-68 (MSGHHEAKPY…EEYEGGEGVP (68 aa)). Over residues 14-29 (RGPAPADEEAAPAAAA) the composition is skewed to low complexity. Composition is skewed to acidic residues over residues 30-39 (DEAEAEAEVE) and 47-63 (EQEY…EYEG). The 36-residue stretch at 100 to 135 (PHVASNTLTLSFQGEVYVFESVSAERVQAVLLLLGG) folds into the Tify domain. Residues 161-203 (RMASLMRFREKRKERNFDKKIRYTVRKEVALRMQRNRGQFTSS) enclose the CCT domain. Residues 198-231 (GQFTSSKSKAEEATSVITSSEGSPNWGAVEGRPP) form a disordered region. The GATA-type zinc-finger motif lies at 236–263 (CHHCGISAASTPMMRRGPDGPRTLCNAC).

The protein belongs to the type IV zinc-finger family. Class C subfamily.

It is found in the nucleus. In terms of biological role, transcriptional activator that specifically binds 5'-GATA-3' or 5'-GAT-3' motifs within gene promoters. The sequence is that of GATA transcription factor 17 from Oryza sativa subsp. japonica (Rice).